We begin with the raw amino-acid sequence, 176 residues long: NAD(P)H-quinone oxidoreductase subunit 6, chloroplastic (176 aa).

5 helical membrane-spanning segments follow: residues 10-30 (ILML…VLLT), 33-53 (IYSA…YFLL), 60-80 (VAQL…AVMF), 95-115 (IGDG…MTTI), and 152-172 (FYLP…GAIT).

Belongs to the complex I subunit 6 family. NDH is composed of at least 16 different subunits, 5 of which are encoded in the nucleus.

It localises to the plastid. The protein localises to the chloroplast thylakoid membrane. The catalysed reaction is a plastoquinone + NADH + (n+1) H(+)(in) = a plastoquinol + NAD(+) + n H(+)(out). The enzyme catalyses a plastoquinone + NADPH + (n+1) H(+)(in) = a plastoquinol + NADP(+) + n H(+)(out). Its function is as follows. NDH shuttles electrons from NAD(P)H:plastoquinone, via FMN and iron-sulfur (Fe-S) centers, to quinones in the photosynthetic chain and possibly in a chloroplast respiratory chain. The immediate electron acceptor for the enzyme in this species is believed to be plastoquinone. Couples the redox reaction to proton translocation, and thus conserves the redox energy in a proton gradient. The protein is NAD(P)H-quinone oxidoreductase subunit 6, chloroplastic (ndhG) of Lolium perenne (Perennial ryegrass).